The sequence spans 387 residues: (S)-8-oxocitronellyl enol synthase (387 aa).

NADP(+)-binding positions include 36–38 (TGI), 64–65 (RR), 82–83 (DI), 106–107 (SW), and Gln-140. Catalysis depends on residues Lys-144 and Tyr-177. The substrate site is built by Lys-144 and Tyr-177. Residues Tyr-177 and 211–213 (SMM) contribute to the NADP(+) site.

This sequence belongs to the short-chain dehydrogenases/reductases (SDR) family. Highly divergent. Expressed in leaves.

It catalyses the reaction (S)-8-oxocitronellyl enol + NADP(+) = (6E)-8-oxogeranial + NADPH + H(+). It carries out the reaction (S)-8-oxocitronellyl enol + NAD(+) = (6E)-8-oxogeranial + NADH + H(+). The enzyme catalyses (R)-8-oxocitronellyl enol + NADP(+) = (6E)-8-oxogeranial + NADPH + H(+). In terms of biological role, iridoid synthase that catalyzes the first step in generation of the iridoid ring scaffold using the linear monoterpene (6E)-8-oxogeranial as substrate. Reduces 8-oxogeranial, generating an unstable product that is subsequently cyclized into several possible products, either non-enzymically or by dedicated cyclases. Iridoids comprise a large family of distinctive bicyclic monoterpenes that possess a wide range of pharmacological activities, including anticancer, anti-inflammatory, antifungal and antibacterial activities. The polypeptide is (S)-8-oxocitronellyl enol synthase (Antirrhinum majus (Garden snapdragon)).